Consider the following 462-residue polypeptide: CD-NTase-associated protein 4 (462 aa).

The interval 1–226 is N-terminal endonuclease domain; it reads MSASLLEKQS…FENFICHALE (226 aa). Active-site residues include Asp50, Glu67, and Lys69. Position 50 (Asp50) interacts with Mg(2+). Positions 235–462 are C-terminal SAVED domain; that stretch reads DPIKINLSAS…QYIPTAELNL (228 aa). Residues 299-301, Trp449, and Tyr454 contribute to the 2',3',3'-c-tri-AMP site; that span reads KQR.

Belongs to the Cap4 nuclease family. In terms of assembly, a monomer in the absence of ligand, in its presence it forms oligomers. It depends on a divalent metal cation as a cofactor.

DNase activity is activated upon ligand binding. Inhibited by EDTA. In terms of biological role, effector DNase of a CBASS antivirus system. CBASS (cyclic oligonucleotide-based antiphage signaling system) provides immunity against bacteriophage. The CD-NTase protein synthesizes cyclic nucleotides in response to infection; these serve as specific second messenger signals. The signals activate a diverse range of effectors, leading to bacterial cell death and thus abortive phage infection. A type II-C(AAAA) CBASS system. Its function is as follows. Binds cyclic nucleotide second messengers (synthesized by CdnD, the cognate CD-NTase in the CBASS operon). Ligand binding activates it to endonucleolytically degrade dsDNA to approximately 6 bp length fragments, with a preference for 5'-C or 5'-G cleavage site. The minor product of CdnD is the activating nucleotide; also binds the major product (2',3',3'-cyclic AMP-AMP-AMP) but is not activated by it. Only binds DNA in the presence of ligand. Is not activated by c-di-AMP, c-di-GMP, 3'3'-cyclic GMP-AMP (3'3'-cGAMP) or 3',3',3'-cyclic AMP-AMP-GMP. This chain is CD-NTase-associated protein 4, found in Acinetobacter sp. (strain ATCC 27244 / 9458).